A 94-amino-acid polypeptide reads, in one-letter code: Integration host factor subunit beta (94 aa).

This sequence belongs to the bacterial histone-like protein family. In terms of assembly, heterodimer of an alpha and a beta chain.

Functionally, this protein is one of the two subunits of integration host factor, a specific DNA-binding protein that functions in genetic recombination as well as in transcriptional and translational control. The polypeptide is Integration host factor subunit beta (Dechloromonas aromatica (strain RCB)).